Consider the following 339-residue polypeptide: Ketol-acid reductoisomerase (NADP(+)) (339 aa).

The 182-residue stretch at 1–182 (MRVYYDRDAD…GGGRSGIIET (182 aa)) folds into the KARI N-terminal Rossmann domain. Residues 24-27 (YGSQ), Lys-48, Ser-51, Thr-53, and 83-86 (DELQ) contribute to the NADP(+) site. His-108 is an active-site residue. NADP(+) is bound at residue Gly-134. The region spanning 183-328 (NFREECETDL…AKLRAMMPWI (146 aa)) is the KARI C-terminal knotted domain. Residues Asp-191, Glu-195, Glu-227, and Glu-231 each contribute to the Mg(2+) site. Ser-252 contacts substrate.

Belongs to the ketol-acid reductoisomerase family. Requires Mg(2+) as cofactor.

The catalysed reaction is (2R)-2,3-dihydroxy-3-methylbutanoate + NADP(+) = (2S)-2-acetolactate + NADPH + H(+). It catalyses the reaction (2R,3R)-2,3-dihydroxy-3-methylpentanoate + NADP(+) = (S)-2-ethyl-2-hydroxy-3-oxobutanoate + NADPH + H(+). Its pathway is amino-acid biosynthesis; L-isoleucine biosynthesis; L-isoleucine from 2-oxobutanoate: step 2/4. It participates in amino-acid biosynthesis; L-valine biosynthesis; L-valine from pyruvate: step 2/4. Involved in the biosynthesis of branched-chain amino acids (BCAA). Catalyzes an alkyl-migration followed by a ketol-acid reduction of (S)-2-acetolactate (S2AL) to yield (R)-2,3-dihydroxy-isovalerate. In the isomerase reaction, S2AL is rearranged via a Mg-dependent methyl migration to produce 3-hydroxy-3-methyl-2-ketobutyrate (HMKB). In the reductase reaction, this 2-ketoacid undergoes a metal-dependent reduction by NADPH to yield (R)-2,3-dihydroxy-isovalerate. The sequence is that of Ketol-acid reductoisomerase (NADP(+)) from Mesorhizobium japonicum (strain LMG 29417 / CECT 9101 / MAFF 303099) (Mesorhizobium loti (strain MAFF 303099)).